An 824-amino-acid chain; its full sequence is Leucine--tRNA ligase (824 aa).

A 'HIGH' region motif is present at residues 42-52 (PYPSGRIHMGH). Positions 581–585 (KMSKS) match the 'KMSKS' region motif. Position 584 (Lys-584) interacts with ATP.

The protein belongs to the class-I aminoacyl-tRNA synthetase family.

The protein resides in the cytoplasm. It catalyses the reaction tRNA(Leu) + L-leucine + ATP = L-leucyl-tRNA(Leu) + AMP + diphosphate. In Geotalea daltonii (strain DSM 22248 / JCM 15807 / FRC-32) (Geobacter daltonii), this protein is Leucine--tRNA ligase.